We begin with the raw amino-acid sequence, 179 residues long: Large ribosomal subunit protein uL5 (179 aa).

Belongs to the universal ribosomal protein uL5 family. As to quaternary structure, part of the 50S ribosomal subunit; part of the 5S rRNA/L5/L18/L25 subcomplex. Contacts the 5S rRNA and the P site tRNA. Forms a bridge to the 30S subunit in the 70S ribosome.

Its function is as follows. This is one of the proteins that bind and probably mediate the attachment of the 5S RNA into the large ribosomal subunit, where it forms part of the central protuberance. In the 70S ribosome it contacts protein S13 of the 30S subunit (bridge B1b), connecting the 2 subunits; this bridge is implicated in subunit movement. Contacts the P site tRNA; the 5S rRNA and some of its associated proteins might help stabilize positioning of ribosome-bound tRNAs. The polypeptide is Large ribosomal subunit protein uL5 (Bordetella petrii (strain ATCC BAA-461 / DSM 12804 / CCUG 43448)).